Consider the following 488-residue polypeptide: Ribulose bisphosphate carboxylase large chain (488 aa).

N127 and T177 together coordinate substrate. The active-site Proton acceptor is the K179. K181 lines the substrate pocket. Mg(2+)-binding residues include K205, D207, and E208. Position 205 is an N6-carboxylysine (K205). H297 acts as the Proton acceptor in catalysis. Residues R298, H330, and S382 each contribute to the substrate site.

This sequence belongs to the RuBisCO large chain family. Type I subfamily. In terms of assembly, heterohexadecamer of 8 large chains and 8 small chains. It depends on Mg(2+) as a cofactor.

It localises to the plastid. It is found in the chloroplast. The enzyme catalyses 2 (2R)-3-phosphoglycerate + 2 H(+) = D-ribulose 1,5-bisphosphate + CO2 + H2O. It catalyses the reaction D-ribulose 1,5-bisphosphate + O2 = 2-phosphoglycolate + (2R)-3-phosphoglycerate + 2 H(+). RuBisCO catalyzes two reactions: the carboxylation of D-ribulose 1,5-bisphosphate, the primary event in carbon dioxide fixation, as well as the oxidative fragmentation of the pentose substrate in the photorespiration process. Both reactions occur simultaneously and in competition at the same active site. The sequence is that of Ribulose bisphosphate carboxylase large chain from Emiliania huxleyi (Coccolithophore).